The chain runs to 305 residues: Mitogen-activated protein kinase kinase 10 (305 aa).

S34 carries the post-translational modification Phosphoserine. Residues 48-302 (LEKLSVLGQG…VEELLRHSFV (255 aa)) enclose the Protein kinase domain. Residues 54–62 (LGQGSGGTV) and K77 each bind ATP. D165 (proton acceptor) is an active-site residue. T200 carries the phosphothreonine modification.

Belongs to the protein kinase superfamily. STE Ser/Thr protein kinase family. MAP kinase kinase subfamily. In terms of assembly, interacts with P.syringae type III effector HopF2.

It catalyses the reaction L-seryl-[protein] + ATP = O-phospho-L-seryl-[protein] + ADP + H(+). The enzyme catalyses L-threonyl-[protein] + ATP = O-phospho-L-threonyl-[protein] + ADP + H(+). The catalysed reaction is L-tyrosyl-[protein] + ATP = O-phospho-L-tyrosyl-[protein] + ADP + H(+). This chain is Mitogen-activated protein kinase kinase 10 (MKK10), found in Arabidopsis thaliana (Mouse-ear cress).